Here is a 1222-residue protein sequence, read N- to C-terminus: ATP-dependent helicase/nuclease subunit A (1222 aa).

Residues 39-495 (QKRTAQQIEA…ILLKENFRSQ (457 aa)) form the UvrD-like helicase ATP-binding domain. An ATP-binding site is contributed by 60-67 (ASAGSGKT). Positions 524 to 810 (QLIAGSHAQT…NLMTIHKSKG (287 aa)) constitute a UvrD-like helicase C-terminal domain.

This sequence belongs to the helicase family. AddA subfamily. Heterodimer of AddA and AddB/RexB. It depends on Mg(2+) as a cofactor.

It catalyses the reaction Couples ATP hydrolysis with the unwinding of duplex DNA by translocating in the 3'-5' direction.. The catalysed reaction is ATP + H2O = ADP + phosphate + H(+). Its function is as follows. The heterodimer acts as both an ATP-dependent DNA helicase and an ATP-dependent, dual-direction single-stranded exonuclease. Recognizes the chi site generating a DNA molecule suitable for the initiation of homologous recombination. The AddA nuclease domain is required for chi fragment generation; this subunit has the helicase and 3' -&gt; 5' nuclease activities. The chain is ATP-dependent helicase/nuclease subunit A from Streptococcus pyogenes serotype M49 (strain NZ131).